Consider the following 295-residue polypeptide: 4-diphosphocytidyl-2-C-methyl-D-erythritol kinase (295 aa).

The active site involves Lys15. Position 102–112 (102–112 (PIASGVGGGSS)) interacts with ATP. Asp144 is a catalytic residue.

It belongs to the GHMP kinase family. IspE subfamily.

The catalysed reaction is 4-CDP-2-C-methyl-D-erythritol + ATP = 4-CDP-2-C-methyl-D-erythritol 2-phosphate + ADP + H(+). It participates in isoprenoid biosynthesis; isopentenyl diphosphate biosynthesis via DXP pathway; isopentenyl diphosphate from 1-deoxy-D-xylulose 5-phosphate: step 3/6. In terms of biological role, catalyzes the phosphorylation of the position 2 hydroxy group of 4-diphosphocytidyl-2C-methyl-D-erythritol. The polypeptide is 4-diphosphocytidyl-2-C-methyl-D-erythritol kinase (Mesorhizobium japonicum (strain LMG 29417 / CECT 9101 / MAFF 303099) (Mesorhizobium loti (strain MAFF 303099))).